We begin with the raw amino-acid sequence, 676 residues long: Kojibiose hydrolase (676 aa).

The signal sequence occupies residues 1-20 (MNKGIIQLLALSLFCISVKA). The Proton donor role is filled by Glu469. The active-site Proton acceptor is the Glu613.

It belongs to the glycosyl hydrolase 65 family.

It catalyses the reaction kojibiose + H2O = beta-D-glucose + D-glucose. Functionally, glycosidase that specifically hydrolyzes kojibiose to beta-glucose and glucose. Besides its activity on kojibiose, is also able to act on alpha-1,2-oligoglucans with a higher degree of polymerization. Shows weak activity on nigerose, but is not capable of breaking down trehalose, maltose, isomaltose, sucrose, isomaltulose, turanose or melezitose. The polypeptide is Kojibiose hydrolase (Mucilaginibacter mallensis).